The sequence spans 305 residues: UDP-3-O-acyl-N-acetylglucosamine deacetylase (305 aa).

Residues His78, His237, and Asp241 each coordinate Zn(2+). The active-site Proton donor is His264.

The protein belongs to the LpxC family. Zn(2+) is required as a cofactor.

The catalysed reaction is a UDP-3-O-[(3R)-3-hydroxyacyl]-N-acetyl-alpha-D-glucosamine + H2O = a UDP-3-O-[(3R)-3-hydroxyacyl]-alpha-D-glucosamine + acetate. It functions in the pathway glycolipid biosynthesis; lipid IV(A) biosynthesis; lipid IV(A) from (3R)-3-hydroxytetradecanoyl-[acyl-carrier-protein] and UDP-N-acetyl-alpha-D-glucosamine: step 2/6. Catalyzes the hydrolysis of UDP-3-O-myristoyl-N-acetylglucosamine to form UDP-3-O-myristoylglucosamine and acetate, the committed step in lipid A biosynthesis. In Burkholderia cenocepacia (strain HI2424), this protein is UDP-3-O-acyl-N-acetylglucosamine deacetylase.